Reading from the N-terminus, the 326-residue chain is Macrosialin (326 aa).

Positions 1–20 are cleaved as a signal peptide; sequence MRLPVCLILLGPLIAQGTEE. The tract at residues 21 to 109 is mucin-like; it reads DCPHKKAVTL…ATSPRSSTVG (89 aa). The Extracellular segment spans residues 21-291; the sequence is DCPHKKAVTL…PCFSCNRDQS (271 aa). Residues 38 to 58 show a composition bias toward low complexity; the sequence is PTATESTASPTTSHRPTTTSH. Residues 38-129 are disordered; the sequence is PTATESTASP…SPRSKGALGN (92 aa). Repeat copies occupy residues 44–49, 50–64, 65–72, and 73–88. Over residues 59-69 the composition is skewed to polar residues; the sequence is GNVTVHTSSGP. Asparagine 60 is a glycosylation site (N-linked (GlcNAc...) asparagine). Low complexity predominate over residues 70 to 80; sequence TTVTHNPATTT. Residues 81–108 are compositionally biased toward polar residues; that stretch reads SHGNATISHATVSPTTNGTATSPRSSTV. 2 N-linked (GlcNAc...) asparagine glycosylation sites follow: asparagine 84 and asparagine 97. Residues 111-120 show a composition bias toward pro residues; sequence HPGPPPPSPS. N-linked (GlcNAc...) asparagine glycosylation is found at asparagine 129, asparagine 134, asparagine 169, asparagine 218, asparagine 233, and asparagine 251. Cysteine 139 and cysteine 177 form a disulfide bridge. Cysteines 249 and 286 form a disulfide. Residues 292–316 form a helical membrane-spanning segment; sequence LLLPLIIGLVLLGLLTLVLIAFCIT. Residues 317-326 lie on the Cytoplasmic side of the membrane; sequence RRRQSTYQPL.

The protein belongs to the LAMP family. In terms of processing, N- and O-glycosylated. Expressed in tissue macrophages and to a lesser extent in dendritic cells.

It is found in the endosome membrane. The protein localises to the lysosome membrane. It localises to the cell membrane. Its function is as follows. Could play a role in phagocytic activities of tissue macrophages, both in intracellular lysosomal metabolism and extracellular cell-cell and cell-pathogen interactions. Binds to tissue- and organ-specific lectins or selectins, allowing homing of macrophage subsets to particular sites. Rapid recirculation of CD68 from endosomes and lysosomes to the plasma membrane may allow macrophages to crawl over selectin-bearing substrates or other cells. In Mus musculus (Mouse), this protein is Macrosialin (Cd68).